The following is a 278-amino-acid chain: Large ribosomal subunit protein uL2 (278 aa).

The disordered stretch occupies residues 201 to 278 (HGNINDGKAG…IMRSRHQRKK (78 aa)). Residues 210–221 (GRSRWRGKRPHV) are compositionally biased toward basic residues.

It belongs to the universal ribosomal protein uL2 family. Part of the 50S ribosomal subunit. Forms a bridge to the 30S subunit in the 70S ribosome.

One of the primary rRNA binding proteins. Required for association of the 30S and 50S subunits to form the 70S ribosome, for tRNA binding and peptide bond formation. It has been suggested to have peptidyltransferase activity; this is somewhat controversial. Makes several contacts with the 16S rRNA in the 70S ribosome. The polypeptide is Large ribosomal subunit protein uL2 (Rhizobium meliloti (strain 1021) (Ensifer meliloti)).